The following is a 652-amino-acid chain: DNA ligase (652 aa).

Residues 29–33 (DSEYD), 78–79 (SL), and glutamate 107 each bind NAD(+). The N6-AMP-lysine intermediate role is filled by lysine 109. Residues arginine 130, glutamate 164, lysine 278, and lysine 302 each contribute to the NAD(+) site. Zn(2+) is bound by residues cysteine 395, cysteine 398, cysteine 413, and cysteine 418. The BRCT domain maps to 577 to 652 (VADAALSGLT…VRDEAWLESL (76 aa)).

Belongs to the NAD-dependent DNA ligase family. LigA subfamily. Mg(2+) is required as a cofactor. Requires Mn(2+) as cofactor.

The enzyme catalyses NAD(+) + (deoxyribonucleotide)n-3'-hydroxyl + 5'-phospho-(deoxyribonucleotide)m = (deoxyribonucleotide)n+m + AMP + beta-nicotinamide D-nucleotide.. Functionally, DNA ligase that catalyzes the formation of phosphodiester linkages between 5'-phosphoryl and 3'-hydroxyl groups in double-stranded DNA using NAD as a coenzyme and as the energy source for the reaction. It is essential for DNA replication and repair of damaged DNA. In Streptococcus pneumoniae (strain Taiwan19F-14), this protein is DNA ligase.